Reading from the N-terminus, the 512-residue chain is Glutamyl-tRNA(Gln) amidotransferase subunit A (512 aa).

Catalysis depends on charge relay system residues Lys82 and Ser157. Ser181 functions as the Acyl-ester intermediate in the catalytic mechanism.

The protein belongs to the amidase family. GatA subfamily. Heterotrimer of A, B and C subunits.

It carries out the reaction L-glutamyl-tRNA(Gln) + L-glutamine + ATP + H2O = L-glutaminyl-tRNA(Gln) + L-glutamate + ADP + phosphate + H(+). In terms of biological role, allows the formation of correctly charged Gln-tRNA(Gln) through the transamidation of misacylated Glu-tRNA(Gln) in organisms which lack glutaminyl-tRNA synthetase. The reaction takes place in the presence of glutamine and ATP through an activated gamma-phospho-Glu-tRNA(Gln). The protein is Glutamyl-tRNA(Gln) amidotransferase subunit A of Bordetella bronchiseptica (strain ATCC BAA-588 / NCTC 13252 / RB50) (Alcaligenes bronchisepticus).